The primary structure comprises 657 residues: Glycogen debranching enzyme (657 aa).

Catalysis depends on D336, which acts as the Nucleophile. E371 serves as the catalytic Proton donor. Positions 458 to 467 are enriched in basic and acidic residues; sequence NEANGEENRD. Residues 458-479 are disordered; sequence NEANGEENRDGTNNNYSNNHGK.

It belongs to the glycosyl hydrolase 13 family.

It carries out the reaction Hydrolysis of (1-&gt;6)-alpha-D-glucosidic linkages to branches with degrees of polymerization of three or four glucose residues in limit dextrin.. It participates in glycan degradation; glycogen degradation. Removes maltotriose and maltotetraose chains that are attached by 1,6-alpha-linkage to the limit dextrin main chain, generating a debranched limit dextrin. In Escherichia coli (strain K12 / DH10B), this protein is Glycogen debranching enzyme.